A 335-amino-acid polypeptide reads, in one-letter code: Ferredoxin--NADP reductase (335 aa).

Aspartate 35, glutamine 43, tyrosine 48, alanine 88, phenylalanine 122, aspartate 287, and serine 328 together coordinate FAD.

Belongs to the ferredoxin--NADP reductase type 2 family. As to quaternary structure, homodimer. FAD serves as cofactor.

It carries out the reaction 2 reduced [2Fe-2S]-[ferredoxin] + NADP(+) + H(+) = 2 oxidized [2Fe-2S]-[ferredoxin] + NADPH. This Thermus thermophilus (strain ATCC BAA-163 / DSM 7039 / HB27) protein is Ferredoxin--NADP reductase.